Reading from the N-terminus, the 275-residue chain is MKRLLFLFLLAGILINNHALQHNETIDLKKLAKIVLPPAYQTRVIGGRVTTNAKLGGYLVAMRYFNNFICGGTLIHELIVLTAAHCFEDRAEKEAWSVDGGISRLSEKGIRRQVKRFIKSAQFKMVTMNMDVAVVLLNRPMVGKNIGTLSLCSTALTPGQTMDVSGWGMTNPDDEGPGHMLRTVSVPVIEKRICREAYRESVSISDSMFCASVLGKKDACTYDSGGPLVYEKQVCGIVSFGIGCASRRYPGVYTDVHYVKPFIVKGIKALLSRSR.

A signal peptide spans M1–A19. A glycan (N-linked (GlcNAc...) asparagine) is linked at N23. The 225-residue stretch at V44–K268 folds into the Peptidase S1 domain. A disulfide bridge links C70 with C86. Active-site charge relay system residues include H85 and D131. Intrachain disulfides connect C194/C210 and C220/C244. The Charge relay system role is filled by S224.

Belongs to the peptidase S1 family. Post-translationally, undergoes cleavage in the male during mating with a cleaved product detected in the ejaculatory duct and/or bulb of males by 8-10 minutes after the start of mating. Further cleavage occurs in the mated female. In terms of tissue distribution, produced in the male accessory glands and secreted into seminal fluid.

The protein localises to the secreted. Seminal fluid protease which is required for cleavage and probably also activation of the metalloprotease Semp1. Also required for a number of female post-mating responses independent of Semp1 including egg laying and sperm usage. The sequence is that of Seminase from Drosophila melanogaster (Fruit fly).